We begin with the raw amino-acid sequence, 269 residues long: Eukaryotic translation initiation factor 3 subunit G-1 (269 aa).

One can recognise an RRM domain in the interval 188 to 266; that stretch reads AAIRISNLSE…LILSVEWSKP (79 aa).

This sequence belongs to the eIF-3 subunit G family. Component of the eukaryotic translation initiation factor 3 (eIF-3) complex. The eIF-3 complex interacts with pix.

It localises to the cytoplasm. RNA-binding component of the eukaryotic translation initiation factor 3 (eIF-3) complex, which is involved in protein synthesis of a specialized repertoire of mRNAs and, together with other initiation factors, stimulates binding of mRNA and methionyl-tRNAi to the 40S ribosome. The eIF-3 complex specifically targets and initiates translation of a subset of mRNAs involved in cell proliferation. This subunit can bind 18S rRNA. The protein is Eukaryotic translation initiation factor 3 subunit G-1 of Drosophila willistoni (Fruit fly).